The sequence spans 143 residues: Large ribosomal subunit protein uL11 (143 aa).

Belongs to the universal ribosomal protein uL11 family. Part of the ribosomal stalk of the 50S ribosomal subunit. Interacts with L10 and the large rRNA to form the base of the stalk. L10 forms an elongated spine to which L12 dimers bind in a sequential fashion forming a multimeric L10(L12)X complex. In terms of processing, one or more lysine residues are methylated.

Forms part of the ribosomal stalk which helps the ribosome interact with GTP-bound translation factors. The protein is Large ribosomal subunit protein uL11 of Herminiimonas arsenicoxydans.